The sequence spans 308 residues: MKPRIVYRPLHGILLLDKPAGLSSNNALQAARRLLRAEKGGHTGSLDPLATGLLPLCFGEATKIAGLLLGSAKAYDAEIVLGVTTDTDDADGQPLRERAVPDLSEADLQAALAPFIGRIQQQAPIYSALKQGGEPLYAKARRGERIEAPVREVDVQAIDVLGYSAPGLRLRVTCGSGTYIRSLARDLGEVLGCGAHIASLRRLWVEPFRAPQMITLEALSAALEAGTEARTLLLPIEAGLAGFARIVLDQTHAARFRMGQRLRDAAFPPGQVAVFGPDGTPSGLGLVDADGRLSPQRLFNGLNEIPAC.

The active-site Nucleophile is the Asp-47.

It belongs to the pseudouridine synthase TruB family. Type 1 subfamily.

The enzyme catalyses uridine(55) in tRNA = pseudouridine(55) in tRNA. Responsible for synthesis of pseudouridine from uracil-55 in the psi GC loop of transfer RNAs. The polypeptide is tRNA pseudouridine synthase B (Xanthomonas euvesicatoria pv. vesicatoria (strain 85-10) (Xanthomonas campestris pv. vesicatoria)).